The following is a 380-amino-acid chain: Alcohol dehydrogenase 1 (380 aa).

8 residues coordinate Zn(2+): C48, T50, H70, C100, C103, C106, C114, and C178. The an alcohol site is built by T50 and H70. Residue T50 coordinates NAD(+). Residues G203–G208, D227, R232, T273, V296, V296–V298, and R373 each bind NAD(+).

Belongs to the zinc-containing alcohol dehydrogenase family. In terms of assembly, homodimer. Zn(2+) is required as a cofactor.

It localises to the cytoplasm. It catalyses the reaction a primary alcohol + NAD(+) = an aldehyde + NADH + H(+). It carries out the reaction a secondary alcohol + NAD(+) = a ketone + NADH + H(+). The polypeptide is Alcohol dehydrogenase 1 (Pisum sativum (Garden pea)).